Reading from the N-terminus, the 436-residue chain is MTKPIVAIVGRPNVGKSTIFNRIVGERVSIVEDTPGVTRDRIYSSGEWLTHDFNIIDTGGIEIGDAPFQTQIRAQAEIAIDEADVIIFMVNVREGLTQSDEMVAQILYKSKKPVVLAVNKVDNMEMRTDVYDFYSLGFGEPYPISGSHGLGLGDLLDAVVSHFGEEEEDPYDEDTIRLSIIGRPNVGKSSLVNAILGEDRVIVSNVAGTTRDAIDTEYSYDGQDYVLIDTAGMRKKGKVYESTEKYSVLRALKAIERSNVVLVVIDAEQGIIEQDKRVAGYAHEQGKAVVIVVNKWDTVEKDSKTMKKFEDEVRKEFQFLDYAQIAFVSAKERTRLRTLFPYINEASENHKKRVQSSTLNEVVTDAISMNPTPTDKGRRLNVFYATQVAIEPPTFVVFVNDVELMHFSYKRYLENQIRAAFGFEGTPIHIIARKRN.

2 consecutive EngA-type G domains span residues 4 to 167 and 176 to 351; these read PIVA…GEEE and IRLS…ENHK. GTP is bound by residues 10–17, 57–61, 119–122, 182–189, 229–233, and 294–297; these read GRPNVGKS, DTGGI, NKVD, DTAGM, and NKWD. In terms of domain architecture, KH-like spans 352 to 436; that stretch reads KRVQSSTLNE…PIHIIARKRN (85 aa).

The protein belongs to the TRAFAC class TrmE-Era-EngA-EngB-Septin-like GTPase superfamily. EngA (Der) GTPase family. As to quaternary structure, associates with the 50S ribosomal subunit.

In terms of biological role, GTPase that plays an essential role in the late steps of ribosome biogenesis. The sequence is that of GTPase Der from Staphylococcus aureus (strain Mu3 / ATCC 700698).